The primary structure comprises 210 residues: Probable GTP-binding protein EngB (210 aa).

The EngB-type G domain maps to 25–199; sequence CGIEVAFAGR…RQKLDSWFSE (175 aa). GTP is bound by residues 33–40, 60–64, 78–81, 145–148, and 178–180; these read GRSNAGKS, GRTQL, DLPG, TKAD, and FSS. Residues Ser40 and Thr62 each contribute to the Mg(2+) site.

It belongs to the TRAFAC class TrmE-Era-EngA-EngB-Septin-like GTPase superfamily. EngB GTPase family. The cofactor is Mg(2+).

Its function is as follows. Necessary for normal cell division and for the maintenance of normal septation. This Salmonella agona (strain SL483) protein is Probable GTP-binding protein EngB.